A 771-amino-acid chain; its full sequence is DNA polymerase 1 (771 aa).

This sequence belongs to the DNA polymerase type-B family.

The catalysed reaction is DNA(n) + a 2'-deoxyribonucleoside 5'-triphosphate = DNA(n+1) + diphosphate. In Pyrococcus abyssi, this protein is DNA polymerase 1 (polI).